The sequence spans 1130 residues: 3-hydroxy-3-methylglutaryl-coenzyme A reductase 1 (1130 aa).

The Cytoplasmic portion of the chain corresponds to 1–46 (MATSLITRKLRSAEATNDVEPGWLKRQVTGVLQSISSHACQHPIHT). Residues 47–67 (IVVIALLASTTYVGLLEGSLF) form a helical membrane-spanning segment. Topologically, residues 68–242 (DSVRNSRNIA…DLIKHAETID (175 aa)) are lumenal. Asn148 carries N-linked (GlcNAc...) asparagine glycosylation. Residues 242–415 (DIVIMTLGYL…FTFYTTILCI (174 aa)) enclose the SSD domain. The helical transmembrane segment at 243–263 (IVIMTLGYLSMHLSFVSLFFS) threads the bilayer. Over 264-270 (MRRLGSN) the chain is Cytoplasmic. Residues 271-291 (FWLAATVLFSGVFAFLFGLLV) form a helical membrane-spanning segment. Residues 292 to 296 (TTKLG) lie on the Lumenal side of the membrane. The chain crosses the membrane as a helical span at residues 297–317 (VPINVLLLSEGLPFLVVTIGF). Topologically, residues 318-366 (EKPIILTRAVLTAAADNRGRAGQASSSTTKSIQDSIQTAIKEQGFEIIR) are cytoplasmic. Residues 367–387 (DYCIEIAILIAGAASGVQGGL) form a helical membrane-spanning segment. Residues 388–389 (RQ) lie on the Lumenal side of the membrane. The helical transmembrane segment at 390–410 (FCFLAAWILFFDCVLLFTFYT) threads the bilayer. Residues 411 to 476 (TILCIKLEIN…RKLRSSSVRR (66 aa)) lie on the Cytoplasmic side of the membrane. Residues 477-497 (FKILMVGGFVLVNVVNLSTIP) form a helical membrane-spanning segment. At 498 to 601 (FRDSSQGAGL…ESLLKSIEDP (104 aa)) the chain is on the lumenal side. The chain crosses the membrane as a helical span at residues 602–622 (IISKWIIAALTLSIILNGYLF). Topologically, residues 623–1130 (NAARWSIKEP…ARGLTMSSSE (508 aa)) are cytoplasmic. Glu792 (charge relay system) is an active-site residue. 798–804 (STSRGAK) is a CoA binding site. NADP(+) is bound by residues 859 to 861 (SRF) and 886 to 894 (DAMGMNMIS). Lys926 functions as the Charge relay system in the catalytic mechanism. 955–957 (VLK) lines the CoA pocket. The active-site Charge relay system is Asp1002. Residue 1097 to 1098 (AH) participates in CoA binding. Residue His1098 is the Proton donor of the active site. 1102-1103 (NR) serves as a coordination point for NADP(+). Residues 1103-1122 (RSAATTRTSTPVSAAVSAAR) show a composition bias toward low complexity. The tract at residues 1103–1130 (RSAATTRTSTPVSAAVSAARGLTMSSSE) is disordered.

Belongs to the HMG-CoA reductase family.

Its subcellular location is the endoplasmic reticulum membrane. It catalyses the reaction (R)-mevalonate + 2 NADP(+) + CoA = (3S)-3-hydroxy-3-methylglutaryl-CoA + 2 NADPH + 2 H(+). It functions in the pathway metabolic intermediate biosynthesis; (R)-mevalonate biosynthesis; (R)-mevalonate from acetyl-CoA: step 3/3. HMG-CoA reductase; part of the first module of ergosterol biosynthesis pathway that includes the early steps of the pathway, conserved across all eukaryotes, and which results in the formation of mevalonate from acetyl-coenzyme A (acetyl-CoA). Hmg1 and hmg2 catalyze the reduction of hydroxymethylglutaryl-CoA (HMG-CoA) to mevalonate. The first module starts with the action of the cytosolic acetyl-CoA acetyltransferase erg10B that catalyzes the formation of acetoacetyl-CoA. The hydroxymethylglutaryl-CoA synthases erg13A and erg13B then condense acetyl-CoA with acetoacetyl-CoA to form HMG-CoA. The rate-limiting step of the early module is the reduction to mevalonate by the 3-hydroxy-3-methylglutaryl-coenzyme A (HMG-CoA) reductases hmg1 and hmg2. Mevalonate is also a precursor for the extracellular siderophore triacetylfusarinine C (TAFC). This is 3-hydroxy-3-methylglutaryl-coenzyme A reductase 1 from Aspergillus fumigatus (strain ATCC MYA-4609 / CBS 101355 / FGSC A1100 / Af293) (Neosartorya fumigata).